Reading from the N-terminus, the 336-residue chain is tRNA N6-adenosine threonylcarbamoyltransferase (336 aa).

Positions 111 and 115 each coordinate Fe cation. Residues 133–137 (LISGG), Asp166, Gly179, and Asn276 contribute to the substrate site. A Fe cation-binding site is contributed by Asp301.

The protein belongs to the KAE1 / TsaD family. Fe(2+) serves as cofactor.

It is found in the cytoplasm. The enzyme catalyses L-threonylcarbamoyladenylate + adenosine(37) in tRNA = N(6)-L-threonylcarbamoyladenosine(37) in tRNA + AMP + H(+). Functionally, required for the formation of a threonylcarbamoyl group on adenosine at position 37 (t(6)A37) in tRNAs that read codons beginning with adenine. Is involved in the transfer of the threonylcarbamoyl moiety of threonylcarbamoyl-AMP (TC-AMP) to the N6 group of A37, together with TsaE and TsaB. TsaD likely plays a direct catalytic role in this reaction. The polypeptide is tRNA N6-adenosine threonylcarbamoyltransferase (Wolbachia pipientis subsp. Culex pipiens (strain wPip)).